Here is a 357-residue protein sequence, read N- to C-terminus: Alkanal monooxygenase alpha chain (357 aa).

It belongs to the bacterial luciferase oxidoreductase family. As to quaternary structure, heterodimer of an alpha and a beta chain.

The catalysed reaction is a long-chain fatty aldehyde + FMNH2 + O2 = a long-chain fatty acid + hnu + FMN + H2O + 2 H(+). Light-emitting reaction in luminous bacteria. The chain is Alkanal monooxygenase alpha chain (luxA) from Kryptophanaron alfredi symbiont.